A 463-amino-acid chain; its full sequence is Protein DML1 (463 aa).

Belongs to the misato family.

Its subcellular location is the mitochondrion. Its function is as follows. Involved in the partitioning of the mitochondrial organelle and mitochondrial DNA (mtDNA) inheritance. The sequence is that of Protein DML1 (DML1) from Debaryomyces hansenii (strain ATCC 36239 / CBS 767 / BCRC 21394 / JCM 1990 / NBRC 0083 / IGC 2968) (Yeast).